Reading from the N-terminus, the 334-residue chain is MIVIPRYSLIKEKASERLPELLENLNLKKPLVITGKNTKKYSKGFEFIYYDEIDIYNEEGFQKIGKEYDSIIGIGGGKPIDIGKIISNKSKKPFVSVPTTASNDGIASPIVSLTQPSYLAESPIAIVADIDIIRESPKKLLSAGMGDIVSNITAVLDWELGKIEMNEKYSDSSGIFSKTIAIELIDYVLNYDLKEYPKKLVKSLIGSGISIAIAHSSRPASGSEHLFSHALDNLKNKYELNINSLHGEQCGLGTIIISQMYYEEGRIDFKTVEKVKNSLKAVNAPVTGKKLGFDEDLLIEALSSAHKVRKRHTILRNGLSKEKAREILEKSEII.

NAD(+) is bound by residues 77 to 81 (GKPID) and 99 to 102 (TTAS). A substrate-binding site is contributed by aspartate 104. Position 108 (serine 108) interacts with NAD(+). Aspartate 147 lines the substrate pocket. Residues aspartate 147 and histidine 225 each contribute to the Zn(2+) site. A substrate-binding site is contributed by histidine 229. Histidine 246 is a binding site for Zn(2+).

It belongs to the glycerol-1-phosphate dehydrogenase family. Zn(2+) serves as cofactor.

It is found in the cytoplasm. The enzyme catalyses sn-glycerol 1-phosphate + NAD(+) = dihydroxyacetone phosphate + NADH + H(+). It catalyses the reaction sn-glycerol 1-phosphate + NADP(+) = dihydroxyacetone phosphate + NADPH + H(+). It participates in membrane lipid metabolism; glycerophospholipid metabolism. Catalyzes the NAD(P)H-dependent reduction of dihydroxyacetonephosphate (DHAP or glycerone phosphate) to glycerol 1-phosphate (G1P). The G1P thus generated is used as the glycerophosphate backbone of phospholipids in the cellular membranes of Archaea. This chain is Glycerol-1-phosphate dehydrogenase [NAD(P)+], found in Methanococcus vannielii (strain ATCC 35089 / DSM 1224 / JCM 13029 / OCM 148 / SB).